A 423-amino-acid chain; its full sequence is Imidazolonepropionase (423 aa).

The Fe(3+) site is built by H91 and H93. Residues H91 and H93 each contribute to the Zn(2+) site. Positions 100, 163, and 193 each coordinate 4-imidazolone-5-propanoate. Y163 contributes to the N-formimidoyl-L-glutamate binding site. Residue H257 participates in Fe(3+) binding. H257 lines the Zn(2+) pocket. Q260 lines the 4-imidazolone-5-propanoate pocket. Fe(3+) is bound at residue D331. Residue D331 participates in Zn(2+) binding. N-formimidoyl-L-glutamate-binding residues include N333 and G335. T336 serves as a coordination point for 4-imidazolone-5-propanoate.

This sequence belongs to the metallo-dependent hydrolases superfamily. HutI family. The cofactor is Zn(2+). It depends on Fe(3+) as a cofactor.

The protein resides in the cytoplasm. The catalysed reaction is 4-imidazolone-5-propanoate + H2O = N-formimidoyl-L-glutamate. Its pathway is amino-acid degradation; L-histidine degradation into L-glutamate; N-formimidoyl-L-glutamate from L-histidine: step 3/3. Functionally, catalyzes the hydrolytic cleavage of the carbon-nitrogen bond in imidazolone-5-propanoate to yield N-formimidoyl-L-glutamate. It is the third step in the universal histidine degradation pathway. The sequence is that of Imidazolonepropionase from Bdellovibrio bacteriovorus (strain ATCC 15356 / DSM 50701 / NCIMB 9529 / HD100).